Consider the following 370-residue polypeptide: Phosphoribosylformylglycinamidine cyclo-ligase (370 aa).

Belongs to the AIR synthase family.

The protein localises to the cytoplasm. It carries out the reaction 2-formamido-N(1)-(5-O-phospho-beta-D-ribosyl)acetamidine + ATP = 5-amino-1-(5-phospho-beta-D-ribosyl)imidazole + ADP + phosphate + H(+). It functions in the pathway purine metabolism; IMP biosynthesis via de novo pathway; 5-amino-1-(5-phospho-D-ribosyl)imidazole from N(2)-formyl-N(1)-(5-phospho-D-ribosyl)glycinamide: step 2/2. The protein is Phosphoribosylformylglycinamidine cyclo-ligase of Rhodospirillum rubrum (strain ATCC 11170 / ATH 1.1.1 / DSM 467 / LMG 4362 / NCIMB 8255 / S1).